A 153-amino-acid chain; its full sequence is uncharacterized protein (153 aa).

An N-terminal signal peptide occupies residues 1–19 (MRKYIPLVLFIFSWPVLCA). Residues Arg46, Glu54, and Arg88 contribute to the active site.

Belongs to the thermonuclease family.

This is an uncharacterized protein from Escherichia coli O157:H7.